Here is a 157-residue protein sequence, read N- to C-terminus: 2-C-methyl-D-erythritol 2,4-cyclodiphosphate synthase (157 aa).

2 residues coordinate a divalent metal cation: Asp8 and His10. 4-CDP-2-C-methyl-D-erythritol 2-phosphate is bound by residues 8 to 10 and 34 to 35; these read DVH and HS. A divalent metal cation is bound at residue His42. 4-CDP-2-C-methyl-D-erythritol 2-phosphate contacts are provided by residues 56 to 58, 61 to 65, 132 to 135, and Phe139; these read DIG, FPDTD, and TTEE.

It belongs to the IspF family. In terms of assembly, homotrimer. It depends on a divalent metal cation as a cofactor.

It catalyses the reaction 4-CDP-2-C-methyl-D-erythritol 2-phosphate = 2-C-methyl-D-erythritol 2,4-cyclic diphosphate + CMP. The protein operates within isoprenoid biosynthesis; isopentenyl diphosphate biosynthesis via DXP pathway; isopentenyl diphosphate from 1-deoxy-D-xylulose 5-phosphate: step 4/6. Functionally, involved in the biosynthesis of isopentenyl diphosphate (IPP) and dimethylallyl diphosphate (DMAPP), two major building blocks of isoprenoid compounds. Catalyzes the conversion of 4-diphosphocytidyl-2-C-methyl-D-erythritol 2-phosphate (CDP-ME2P) to 2-C-methyl-D-erythritol 2,4-cyclodiphosphate (ME-CPP) with a corresponding release of cytidine 5-monophosphate (CMP). This is 2-C-methyl-D-erythritol 2,4-cyclodiphosphate synthase from Clostridium botulinum (strain Eklund 17B / Type B).